A 141-amino-acid chain; its full sequence is Calcitonin (141 aa).

Residues 1 to 25 (MGFQKFSPFLALSILVLLQAGSLHA) form the signal peptide. Residues 26-82 (APFRSALESSPADPATLSEDEARLLLAALVQDYVQMKASELEQEQEREGSSLDSPRS) constitute a propeptide that is removed on maturation. S43 is modified (phosphoserine). Disordered regions lie at residues 64–85 (SELEQEQEREGSSLDSPRSKRC) and 111–141 (IGVGAPGKKRDMSSDLERDHRPHVSMPQNAN). Cysteines 85 and 91 form a disulfide. The residue at position 116 (P116) is a Proline amide. A compositionally biased stretch (basic and acidic residues) spans 118-132 (KKRDMSSDLERDHRP).

The protein belongs to the calcitonin family.

Its subcellular location is the secreted. Calcitonin is a peptide hormone that causes a rapid but short-lived drop in the level of calcium and phosphate in blood by promoting the incorporation of those ions in the bones. Calcitonin function is mediated by the calcitonin receptor/CALCR and the CALCR-RAMP2 (AMYR2) receptor complex. In terms of biological role, katacalcin is a potent plasma calcium-lowering peptide. The polypeptide is Calcitonin (Homo sapiens (Human)).